The chain runs to 395 residues: uncharacterized protein (395 aa).

Belongs to the UDP-glycosyltransferase family.

This is an uncharacterized protein from Bacillus subtilis (strain 168).